Consider the following 156-residue polypeptide: Ribonuclease H (156 aa).

Residues 7 to 148 enclose the RNase H type-1 domain; that stretch reads QDKIVMIATD…ADQLASDAAI (142 aa). Residues Asp16, Glu54, Asp76, and Asp140 each coordinate Mg(2+).

It belongs to the RNase H family. Monomer. It depends on Mg(2+) as a cofactor.

It is found in the cytoplasm. It carries out the reaction Endonucleolytic cleavage to 5'-phosphomonoester.. Functionally, endonuclease that specifically degrades the RNA of RNA-DNA hybrids. In Zymomonas mobilis subsp. mobilis (strain ATCC 31821 / ZM4 / CP4), this protein is Ribonuclease H (rnhA).